A 347-amino-acid polypeptide reads, in one-letter code: Selenide, water dikinase (347 aa).

Cys-17 is an active-site residue. ATP-binding positions include Lys-20 and 48 to 50 (TRD). Residue Asp-51 coordinates Mg(2+). Residues Asp-68, Asp-91, and 139 to 141 (GHS) contribute to the ATP site. Asp-91 provides a ligand contact to Mg(2+). Asp-227 is a binding site for Mg(2+).

The protein belongs to the selenophosphate synthase 1 family. Class I subfamily. Homodimer. The cofactor is Mg(2+).

It catalyses the reaction hydrogenselenide + ATP + H2O = selenophosphate + AMP + phosphate + 2 H(+). Its function is as follows. Synthesizes selenophosphate from selenide and ATP. The polypeptide is Selenide, water dikinase (Cronobacter sakazakii (strain ATCC BAA-894) (Enterobacter sakazakii)).